The chain runs to 582 residues: Hydrazine dehydrogenase (582 aa).

The first 32 residues, 1 to 32 (MRKFLKVTLASALIGCGVIGTVSSLMVKEAKA), serve as a signal peptide directing secretion. Heme c-binding residues include Cys121, Cys124, His125, His141, Cys151, Cys154, His155, His159, Cys170, Cys175, His176, His191, Cys216, Cys219, His220, Cys227, Cys230, His231, His234, Cys247, Cys250, His251, His267, Cys297, Cys300, His301, His306, Cys342, Cys345, His346, His454, and Tyr462. A disordered region spans residues 561–582 (GSHSAHHHESGHDPAARSMKEH). A compositionally biased stretch (basic and acidic residues) spans 567–582 (HHESGHDPAARSMKEH).

In terms of assembly, homotrimer; subunits are linked by two covalent bonds between Tyr-462 of one subunit and heme P460 of an adjacent subunit. May form 24-mer of an octamer of trimers. Heme c serves as cofactor.

It is found in the anammoxosome. It catalyses the reaction hydrazine + 4 Fe(III)-[cytochrome c] = N2 + 4 Fe(II)-[cytochrome c] + 4 H(+). It functions in the pathway nitrogen metabolism. Is strongly and competitively inhibited by NO and hydroxylamine. Catalyzes the four-electron oxidation of hydrazine to N2. The electrons derived from hydrazine oxidation may be transferred to the quinone pool and exploited to promote the generation of proton-motive force (pmf) across the anammoxosome membrane. Is involved in anaerobic ammonium oxidation (anammox), a biological process in which nitrite is used as the electron acceptor in the conversion of ammonium to dinitrogen gas (N2) and water; this bacterial process has a major role in the Earth's nitrogen cycle and has been estimated to synthesize up to 50% of the dinitrogen gas emitted into our atmosphere from the oceans. Cannot oxidize hydroxylamine to NO. The polypeptide is Hydrazine dehydrogenase (Kuenenia stuttgartiensis).